Here is a 658-residue protein sequence, read N- to C-terminus: Outer dynein arm-docking complex subunit 1 (658 aa).

Coiled coils occupy residues 11–156, 186–234, and 303–380; these read KEVH…RYLN, REEA…KNDE, and NFIN…TDIQ. Disordered stretches follow at residues 496–552 and 574–658; these read DEEE…SVSH and GAPV…RGYN. Phosphoserine occurs at positions 500, 506, 507, and 509. Composition is skewed to low complexity over residues 506 to 519, 574 to 583, 592 to 604, and 621 to 639; these read SSPS…QISL, GAPVSSRSSQ, TSSS…TGYL, and SMGS…HASS.

Belongs to the ODA1/DCC2 family. As to quaternary structure, component of the outer dynein arm-docking complex along with ODAD2, ODAD3, ODAD4 and CLXN. Interacts with ODAD3. Interacts with ODAD4; this interaction may facilitate the recruitment and/or attachment of outer dynein arm docking complex proteins including ODAD1, ODAD3, and ODAD4 to ciliary axonemes. Interacts with DNAH9. Interacts with MNS1. Interacts with PIERCE1 and PIERCE2; the interactions link the outer dynein arms docking complex (ODA-DC) to the internal microtubule inner proteins (MIP) in cilium axoneme. In terms of tissue distribution, expressed in motile ciliated tissues.

Its subcellular location is the cytoplasm. The protein localises to the cytoskeleton. It is found in the cilium axoneme. In terms of biological role, component of the outer dynein arm-docking complex that mediates outer dynein arms (ODA) binding onto the doublet microtubule. Involved in mediating assembly of both ODAs and their axonemal docking complex onto ciliary microtubules. This is Outer dynein arm-docking complex subunit 1 (Odad1) from Mus musculus (Mouse).